The primary structure comprises 269 residues: MAVGIFDSGLGGLTVLEAAQKRLPEVEFLYYADSAHAPYGVRTPDDIFQLTRAAVHDLWNRGCDLVILACNTASAAALRRMQEEGVPPGKRVLGVFVPLIEALTERQWGDNSPPREVEVKNVALFATPATVASRAFQRELAFRAIGVDVEAQACGGVVDAIEEGDLILAEALVRSHVDALKRKMPYPQAAILGCTHYPLMEPIFQDALGPDVRVFSQGNLVADSLADYLERHPNMRGSGAAGYLTTGKPATVSNRATQFLRRQITFAAA.

Substrate contacts are provided by residues 7–8 (DS) and 39–40 (YG). Cys-70 serves as the catalytic Proton donor/acceptor. Residue 71–72 (NT) coordinates substrate. Cys-194 functions as the Proton donor/acceptor in the catalytic mechanism. 195 to 196 (TH) contributes to the substrate binding site.

It belongs to the aspartate/glutamate racemases family.

It carries out the reaction L-glutamate = D-glutamate. It participates in cell wall biogenesis; peptidoglycan biosynthesis. In terms of biological role, provides the (R)-glutamate required for cell wall biosynthesis. This is Glutamate racemase from Ruegeria pomeroyi (strain ATCC 700808 / DSM 15171 / DSS-3) (Silicibacter pomeroyi).